We begin with the raw amino-acid sequence, 864 residues long: MHEKYVPSDVESAAQGQWRATDAYKTTETADKPKFYCVSMLPYPSGKLHMGHVRNYTINDVMYRYLRMNGYNTLMPMGWDAFGMPAENAAMANGVPPAKWTYDNIAYMKKQMQSMGLAIDWSREVATCSPDYYKWNQWIFLKMLEKGIAYKKTGTVNWDPVDQTVLANEQVIDGRGWRSGALVEKREIPMYYMRITQYADELLNDLDGLGWPERVKVMQQNWIGKSFGVNFGFPYELDGEQKLLRVFTTRADTIMGVTFCAVAAEHPLATRLAQGRPDLQSFIDECKHGGVAEADMATMEKKGMATGFFVTHPLTQEKVEVWIGNYVLMSYGEGAVMGVPAHDERDFAFVKKYGIPVKQVVAVEGETFSTDAWQESYGDKENGVLINSGKYDGLKYGEAVDAIAADLKALGLGEKQVTWRLRDWGISRQRYWGTPIPIIHCPSCGDVPVPEKDLPVVLPEDLVPDGTGNPLAKSEAFLNCTCPTCGAAAKRETDTMDTFVDSSWYFYRYAAPDAKTMVDARTDYWMPMDQYIGGIEHAILHLLYSRFWAKVCRDLGIVKFGEPAKNLLTQGMVLNETYYRENDAGKKTWYNPADVTVTHDDKGRPVGATLNADGQPVVLGGVEKMSKSKNNGVDPQVLIDQYGADTARLFTMFAAPPEQQLEWSGAGVEGASRFLRRVWAFGQANETALTERAPFDAAKLADTEKTLRREIYSVLKQADFDYQRLQYNTVVSAAMKMLNAIEGAKGASAAVLRETYGVLLRVLYPVVPHVTFQLWRELGYEGEFGSLLDAPWPKVDEKALEQSEIELVLQVNGKVRGAVTVAKDASREAIEAVALAHEMFAKFSEGKPAKKVIVVPGRLVNVVV.

A 'HIGH' region motif is present at residues 42-52; it reads PYPSGKLHMGH. A 'KMSKS' region motif is present at residues 624–628; sequence KMSKS. Position 627 (Lys627) interacts with ATP.

The protein belongs to the class-I aminoacyl-tRNA synthetase family.

It is found in the cytoplasm. The enzyme catalyses tRNA(Leu) + L-leucine + ATP = L-leucyl-tRNA(Leu) + AMP + diphosphate. The protein is Leucine--tRNA ligase of Paraburkholderia phymatum (strain DSM 17167 / CIP 108236 / LMG 21445 / STM815) (Burkholderia phymatum).